Reading from the N-terminus, the 454-residue chain is N-myc 2 proto-oncogene protein (454 aa).

Disordered regions lie at residues 132–166, 230–269, and 325–374; these read SEKM…HSGT, VAAP…DEEE, and PSPY…VRRR. The segment covering 151 to 161 has biased composition (low complexity); it reads PGAGAASPAGR. Residues 256-269 are compositionally biased toward acidic residues; sequence ALSDEVDEEEDEEE. Residues 363-374 are compositionally biased toward basic and acidic residues; that stretch reads RKSDSEDSVRRR. The bHLH domain maps to 371-423; sequence VRRRNHNILERQRRNDLRSSFTTLRDHVPELVKNEKAAKVVILKKACEYVHYL. Residues 423-444 are leucine-zipper; it reads LQAKEHQLLMEKEKLQARQQQL.

In terms of assembly, efficient DNA binding requires dimerization with another bHLH protein.

The protein localises to the nucleus. The chain is N-myc 2 proto-oncogene protein (N-MYC2) from Marmota monax (Woodchuck).